Here is a 172-residue protein sequence, read N- to C-terminus: Large ribosomal subunit protein uL10 (172 aa).

This sequence belongs to the universal ribosomal protein uL10 family. In terms of assembly, part of the ribosomal stalk of the 50S ribosomal subunit. The N-terminus interacts with L11 and the large rRNA to form the base of the stalk. The C-terminus forms an elongated spine to which L12 dimers bind in a sequential fashion forming a multimeric L10(L12)X complex.

Forms part of the ribosomal stalk, playing a central role in the interaction of the ribosome with GTP-bound translation factors. The chain is Large ribosomal subunit protein uL10 from Chlorobium phaeovibrioides (strain DSM 265 / 1930) (Prosthecochloris vibrioformis (strain DSM 265)).